A 476-amino-acid chain; its full sequence is WASH complex subunit 1 (476 aa).

The required for WASH complex assembly stretch occupies residues 1–54 (MTTVAQKHFLEGQTYSVPLIQPDLRREEAVQQVADALQYLQKVSGDIFNRISQR). Disordered stretches follow at residues 273–412 (SAPS…QGGD) and 427–476 (GISG…DWES). Positions 284–296 (TFSTESVEPSQAD) are enriched in polar residues. Pro residues predominate over residues 302–333 (LLPPPPPPPPPPPPVMPTTVPPPPPLPQPTAP). Residues 354–476 (QGAPKEVVNP…GEEDEDDWES (123 aa)) are VCA. In terms of domain architecture, WH2 spans 366–388 (GRASLLESIRQAGGIGKANLRSV). Residues 387 to 403 (SVKERKLEKKKQKEQEQ) show a composition bias toward basic and acidic residues. The span at 467–476 (GEEDEDDWES) shows a compositional bias: acidic residues.

The protein belongs to the WASH1 family. In terms of assembly, component of the WASH complex.

The protein localises to the early endosome membrane. It localises to the recycling endosome membrane. Acts as a nucleation-promoting factor at the surface of endosomes, where it recruits and activates the Arp2/3 complex to induce actin polymerization, playing a key role in the fission of tubules that serve as transport intermediates during endosome sorting. In Gallus gallus (Chicken), this protein is WASH complex subunit 1.